The chain runs to 1338 residues: Thioester-containing protein 1 allele S3 (1338 aa).

Residues 1–21 (MWQFIRSRILTVIIFIGAAHG) form the signal peptide. Residues Asn-68, Asn-199, Asn-242, Asn-312, and Asn-481 are each glycosylated (N-linked (GlcNAc...) asparagine). The interval 580–609 (ENEFDIFHSLGLFARTLDDILFDSANEKTG) is may contain the cleavage site. Residues Asn-637, Asn-728, Asn-813, and Asn-828 are each glycosylated (N-linked (GlcNAc...) asparagine). A cross-link (isoglutamyl cysteine thioester (Cys-Gln)) is located at residues 859–862 (CGEQ). 3 cysteine pairs are disulfide-bonded: Cys-1217–Cys-1283, Cys-1326–Cys-1338, and Cys-1329–Cys-1334.

Heterodimer of a TEP1-N chain and an TEP1-C chain non-covalently linked. Forms a complex composed of TEP1-N and TEP1-C heterodimer, LRIM1 and APL1C; the interaction stabilizes TEP1-N and TEP1-C heterodimer, prevents its binding to tissues while circulating in the hemolymph and protects the thioester bond from hydrolysis. Mature TEP1 and to a lesser extent full-length TEP1 interact with SPCLIP1; the interaction is induced by microbial infection. In the hemolymph, the full-length protein is cleaved by an unknow protease into a 75kDa N-terminal (TEP1-N) chain and an 80kDa C-terminal (TEP1-C) chain which remain non-covalently linked. The TEP1-C chain contains the thioester bond which covalently binds to the pathogen surface. Cleavage is induced by bacterial infection or aseptic wound injury. During embryonic and pupal development, the cleaved form is the predominant form. In terms of processing, N-glycosylated.

It localises to the secreted. Plays an essential role in the innate immune response against bacteria, fungi and protozoa infection. After proteolytic cleavage, the protein C-terminus binds covalently through a thioester bond to the pathogen surface resulting in pathogen clearance either by melanization or lysis. Initiate the recruitment and activation of a cascade of proteases, mostly of CLIP-domain serine proteases, which leads to the proteolytic cleavage of the prophenoloxidase (PPO) into active phenoloxidase (PO), the rate-limiting enzyme in melanin biosynthesis. In response to parasite P.berghei-mediated infection, binds to and mediates killing of ookinetes, as they egress from midgut epithelial cells into the basal labyrinth, by both lysis and melanization. During bacterial infection, binds to both Gram-positive and Gram-negative bacteria but only promotes phagocytosis of Gram-negative bacteria. Promotes the accumulation of SPCLIP1 onto the surface of P.berghei ookinetes and bacterium E.coli which leads to the melanization of the pathogen. Recruits CLIPA2 to bacteria surface. In response to bacterial infection, required for periostial hemocyte aggregation, but not for the aggregation of sessile hemocytes in non-periostial regions. During the late stage of fungus B.bassiana-mediated infection, required for the initiation of hyphae melanization by binding to the surface of hyphae and recruiting prophenoloxidase PPO to them. Plays a role in male fertility by binding to defective sperm cells and promoting their removal during spermatogenesis. Its function is as follows. Binds to and mediates killing of parasite P.bergei ookinetes by lysis. In terms of biological role, binds covalently through a thioester bond to the pathogen surface resulting in pathogen clearance. This chain is Thioester-containing protein 1 allele S3, found in Anopheles gambiae (African malaria mosquito).